The primary structure comprises 131 residues: Cell cycle protein GpsB (131 aa).

A coiled-coil region spans residues 39–76 (LDGIIRDYEAFTNEIDRLKEENTKLFSRVDELTKQLSV). Residues 111-131 (KLSDSSVDNHDDGNHSDVDQY) form a disordered region. Basic and acidic residues predominate over residues 117 to 131 (VDNHDDGNHSDVDQY).

This sequence belongs to the GpsB family. Forms polymers through the coiled coil domains. Interacts with PBP1, MreC and EzrA.

It is found in the cytoplasm. Divisome component that associates with the complex late in its assembly, after the Z-ring is formed, and is dependent on DivIC and PBP2B for its recruitment to the divisome. Together with EzrA, is a key component of the system that regulates PBP1 localization during cell cycle progression. Its main role could be the removal of PBP1 from the cell pole after pole maturation is completed. Also contributes to the recruitment of PBP1 to the division complex. Not essential for septum formation. This Lacticaseibacillus casei (strain BL23) (Lactobacillus casei) protein is Cell cycle protein GpsB.